Reading from the N-terminus, the 407-residue chain is MKRAFIMVLDSFGIGATEDAERFGDVGADTLGHIAEACAKGEADHGRKGPLNLPNLTRLGLAKAHEGSTGFIPAGMDGNAEVIGAYAWAHEMSSGKDTPSGHWEIAGVPVLFEWGYFSDHENSFPQELLDKLVERANLPGYLGNCHSSGTVILDQLGEEHMKTGKPIFYTSADSVFQIACHEETFGLDKLYELCEIAREELTNGGYNIGRVIARPFIGDKAGNFQRTGNRHDLAVEPPAPTVLQKLVDEKHGQVVSVGKIADIYANCGITKKVKATGLDALFDATIKEMKEAGDNTIVFTNFVDFDSSWGHRRDVAGYAAGLELFDRRLPELMSLLRDDDILILTADHGCDPTWTGTDHTREHIPVLVYGPKVKPGSLGHRETFADIGQTLAKYFGTSDMEYGKAMF.

The Mn(2+) site is built by Asp-10, Asp-306, His-311, Asp-347, His-348, and His-359.

It belongs to the phosphopentomutase family. Mn(2+) is required as a cofactor.

It localises to the cytoplasm. It catalyses the reaction 2-deoxy-alpha-D-ribose 1-phosphate = 2-deoxy-D-ribose 5-phosphate. It carries out the reaction alpha-D-ribose 1-phosphate = D-ribose 5-phosphate. Its pathway is carbohydrate degradation; 2-deoxy-D-ribose 1-phosphate degradation; D-glyceraldehyde 3-phosphate and acetaldehyde from 2-deoxy-alpha-D-ribose 1-phosphate: step 1/2. Its function is as follows. Isomerase that catalyzes the conversion of deoxy-ribose 1-phosphate (dRib-1-P) and ribose 1-phosphate (Rib-1-P) to deoxy-ribose 5-phosphate (dRib-5-P) and ribose 5-phosphate (Rib-5-P), respectively. This chain is Phosphopentomutase, found in Escherichia coli (strain UTI89 / UPEC).